We begin with the raw amino-acid sequence, 314 residues long: Mitochondrial RNA-splicing protein MRS3 (314 aa).

Solcar repeat units lie at residues 31–118 (APLY…CKKN), 128–210 (HHPF…STKF), and 217–310 (YNPL…AKHF). 6 helical membrane passes run 33 to 52 (LYHQ…SVMF), 93 to 112 (GVQS…FGTY), 130 to 149 (PFKT…ALMN), 185 to 204 (SYPT…FVIY), 219 to 238 (PLIH…AITT), and 285 to 298 (GWKP…PATA).

This sequence belongs to the mitochondrial carrier (TC 2.A.29) family.

The protein localises to the mitochondrion inner membrane. Functionally, MRS3 suppresses a mitochondrial splice defect in the first intron of the COB gene. It may act as a carrier, exerting its suppressor activity via modulation of solute concentrations in the mitochondrion (possibly of cations). The polypeptide is Mitochondrial RNA-splicing protein MRS3 (MRS3) (Saccharomyces cerevisiae (strain ATCC 204508 / S288c) (Baker's yeast)).